A 428-amino-acid polypeptide reads, in one-letter code: Adenylosuccinate synthetase (428 aa).

GTP is bound by residues 12 to 18 (GDEGKGK) and 40 to 42 (GHT). Residue Asp-13 is the Proton acceptor of the active site. Residues Asp-13 and Gly-40 each contribute to the Mg(2+) site. IMP is bound by residues 13–16 (DEGK), 38–41 (NAGH), Thr-130, Arg-144, Gln-225, Thr-240, and Arg-304. His-41 functions as the Proton donor in the catalytic mechanism. 300–306 (VNTGRSR) contacts substrate. GTP is bound by residues Arg-306, 332-334 (KID), and 414-416 (GVG).

This sequence belongs to the adenylosuccinate synthetase family. Homodimer. Requires Mg(2+) as cofactor.

The protein localises to the cytoplasm. The enzyme catalyses IMP + L-aspartate + GTP = N(6)-(1,2-dicarboxyethyl)-AMP + GDP + phosphate + 2 H(+). Its pathway is purine metabolism; AMP biosynthesis via de novo pathway; AMP from IMP: step 1/2. Plays an important role in the de novo pathway of purine nucleotide biosynthesis. Catalyzes the first committed step in the biosynthesis of AMP from IMP. The protein is Adenylosuccinate synthetase of Clostridium beijerinckii (strain ATCC 51743 / NCIMB 8052) (Clostridium acetobutylicum).